The chain runs to 457 residues: Streptogrisin-C (457 aa).

Positions 1 to 34 (MERTTLRRRALVAGTATVAVGALALAGLTGVASA) form a signal peptide, tat-type signal. Positions 35–202 (DPAATAAPPV…ARSAEQPRAL (168 aa)) are excised as a propeptide. A catalytic region spans residues 203–393 (ADIRGGDAYY…QAYGLTLVTS (191 aa)). Cys-219 and Cys-239 are oxidised to a cystine. Residues His-238 and Asp-266 each act as charge relay system in the active site. Intrachain disulfides connect Cys-305–Cys-315 and Cys-341–Cys-368. Ser-347 serves as the catalytic Charge relay system. Positions 393 to 412 (SGGGTPTDPPTTPPTDSPGG) are disordered. A linker region spans residues 394 to 413 (GGGTPTDPPTTPPTDSPGGT). The span at 399 to 408 (TDPPTTPPTD) shows a compositional bias: pro residues. One can recognise a Chitin-binding type-3 domain in the interval 415 to 457 (AVGTAYAAGATVTYGGATYRCLQAHTAQPGWTPADVPALWQRV).

It belongs to the peptidase S1 family. In terms of assembly, monomer. Post-translationally, predicted to be exported by the Tat system. The position of the signal peptide cleavage has not been experimentally proven.

In terms of biological role, hydrolysis of proteins with specificity similar to chymotrypsin. May be specialized for the degradation of chitin-linked proteins. Has a primary specificity for large aliphatic or aromatic amino acids. In Streptomyces griseus, this protein is Streptogrisin-C (sprC).